The primary structure comprises 386 residues: S-adenosylmethionine synthase (386 aa).

An ATP-binding site is contributed by histidine 16. Aspartate 18 lines the Mg(2+) pocket. Glutamate 44 serves as a coordination point for K(+). L-methionine-binding residues include glutamate 57 and glutamine 100. A flexible loop region spans residues 100–110 (QSPDINVGVDQ). ATP contacts are provided by residues 164 to 166 (DGK), 231 to 232 (RF), aspartate 240, 246 to 247 (RK), alanine 263, and lysine 267. Aspartate 240 lines the L-methionine pocket. Lysine 271 lines the L-methionine pocket.

Belongs to the AdoMet synthase family. In terms of assembly, homotetramer; dimer of dimers. The cofactor is Mg(2+). K(+) is required as a cofactor.

It is found in the cytoplasm. It carries out the reaction L-methionine + ATP + H2O = S-adenosyl-L-methionine + phosphate + diphosphate. It participates in amino-acid biosynthesis; S-adenosyl-L-methionine biosynthesis; S-adenosyl-L-methionine from L-methionine: step 1/1. Functionally, catalyzes the formation of S-adenosylmethionine (AdoMet) from methionine and ATP. The overall synthetic reaction is composed of two sequential steps, AdoMet formation and the subsequent tripolyphosphate hydrolysis which occurs prior to release of AdoMet from the enzyme. The chain is S-adenosylmethionine synthase from Sulfurovum sp. (strain NBC37-1).